The primary structure comprises 164 residues: UPF0201 protein MA_4659 (164 aa).

It belongs to the UPF0201 family.

The polypeptide is UPF0201 protein MA_4659 (Methanosarcina acetivorans (strain ATCC 35395 / DSM 2834 / JCM 12185 / C2A)).